We begin with the raw amino-acid sequence, 142 residues long: U1 small nuclear ribonucleoprotein C (142 aa).

Residues 4 to 36 (YYCDYCDTFLTHDSPSVRKTHNGGRKHKDNVRM) form a Matrin-type zinc finger.

This sequence belongs to the U1 small nuclear ribonucleoprotein C family. In terms of assembly, U1 snRNP is composed of the 7 core Sm proteins B/B', D1, D2, D3, E, F and G that assemble in a heptameric protein ring on the Sm site of the small nuclear RNA to form the core snRNP, and at least 3 U1 snRNP-specific proteins U1-70K, U1-A and U1-C. U1-C interacts with U1 snRNA and the 5' splice-site region of the pre-mRNA.

It is found in the nucleus. In terms of biological role, component of the spliceosomal U1 snRNP, which is essential for recognition of the pre-mRNA 5' splice-site and the subsequent assembly of the spliceosome. U1-C is directly involved in initial 5' splice-site recognition for both constitutive and regulated alternative splicing. The interaction with the 5' splice-site seems to precede base-pairing between the pre-mRNA and the U1 snRNA. Stimulates commitment or early (E) complex formation by stabilizing the base pairing of the 5' end of the U1 snRNA and the 5' splice-site region. The chain is U1 small nuclear ribonucleoprotein C from Caenorhabditis elegans.